A 109-amino-acid polypeptide reads, in one-letter code: Mitochondrial pyruvate carrier 1 (109 aa).

Alanine 2 carries the N-acetylalanine modification. At 2-20 the chain is on the mitochondrial matrix side; that stretch reads AGALVRKAADYVRSKDFRD. A helical transmembrane segment spans residues 21–41; that stretch reads YLMSTHFWGPVANWGLPIAAI. At 42 to 52 the chain is on the mitochondrial intermembrane side; it reads NDMKKSPEIIS. The helical transmembrane segment at 53–71 threads the bilayer; the sequence is GRMTFALCCYSLTFMRFAY. Residue lysine 72 is modified to N6-acetyllysine. Topologically, residues 72 to 109 are mitochondrial matrix; sequence KVQPRNWLLFACHATNEVAQLIQGGRLIKHEMTKTASA.

It belongs to the mitochondrial pyruvate carrier (MPC) (TC 2.A.105) family. As to quaternary structure, homodimer. Forms heterodimer with MPC2. The heterodimer is the more stable and dominant form.

Its subcellular location is the mitochondrion inner membrane. The catalysed reaction is pyruvate(out) + H(+)(out) = pyruvate(in) + H(+)(in). Its function is as follows. Mediates the uptake of pyruvate into mitochondria. The sequence is that of Mitochondrial pyruvate carrier 1 (MPC1) from Homo sapiens (Human).